The primary structure comprises 199 residues: Transcription factor 15 (199 aa).

The segment at 25–67 is disordered; sequence EENRSESDASDQSFGCCEGPEAARRGPGPGGGRRAGGGGGAGP. Residues 51 to 66 are compositionally biased toward gly residues; the sequence is PGPGGGRRAGGGGGAG. Positions 72-124 constitute a bHLH domain; that stretch reads RQRQAANARERDRTQSVNTAFTALRTLIPTEPVDRKLSKIETVRLASSYIAHL.

In terms of assembly, heterodimer; efficient DNA binding requires dimerization with another bHLH protein, such as TCF3/E12. Interacts with MEOX2.

The protein resides in the nucleus. Functionally, early transcription factor that plays a key role in somitogenesis, paraxial mesoderm development and regulation of stem cell pluripotency. Essential for the mesenchymal to epithelial transition associated with somite formation. Required for somite morphogenesis, thereby regulating patterning of the axial skeleton and skeletal muscles. Required for proper localization of somite epithelium markers during the mesenchymal to epithelial transition. Also plays a key role in regulation of stem cell pluripotency. Promotes pluripotency exit of embryonic stem cells (ESCs) by priming ESCs for differentiation. Acts as a key regulator of self-renewal of hematopoietic stem cells (HSCs) by mediating HSCs quiescence and long-term self-renewal. Together with MEOX2, regulates transcription in heart endothelial cells to regulate fatty acid transport across heart endothelial cells. Acts by forming a heterodimer with another helix-loop-helix (bHLH) protein, such as TCF3/E12, that binds DNA on E-box motifs (5'-CANNTG-3') and activates transcription of target genes. This is Transcription factor 15 from Homo sapiens (Human).